Consider the following 4965-residue polypeptide: Auxin transport protein BIG (4965 aa).

3 helical membrane passes run 289-309, 646-666, and 772-792; these read SDICCTVQVCILASLLEIFSP, ACLAAYVVVSGNTSVMVAYEV, and LFLICWSTLSGIGYSGGYEGL. The disordered stretch occupies residues 1383-1425; sequence TNQESNSTVDCDASSGEEDEDDGTSDGELVSIDRDEEEDGNSE. Positions 1397–1407 are enriched in acidic residues; the sequence is SGEEDEDDGTS. The segment at 1431–1502 adopts a UBR-type zinc-finger fold; the sequence is KVCTFTSSGS…RGSSCQCLKP (72 aa). The interval 2437–2456 is disordered; it reads DDAPDNHAKASAASNSTTGN. Residues 2445–2456 show a composition bias toward low complexity; it reads KASAASNSTTGN. The ZZ-type zinc-finger motif lies at 2469–2528; sequence SVQYCCDGCSTVPILRRRWHCNICPDFDLCETCYEILDADRLPAPHSRDHPMSAIPIELD. Residues Cys2474, Cys2477, Cys2489, Cys2492, Cys2498, Cys2501, His2514, and His2518 each coordinate Zn(2+). The disordered stretch occupies residues 2997–3037; that stretch reads NAQKTESGDIGSSTRTGSQSSDSKKKRKGDDSSEGSSEKSC. Residues 3007-3017 are compositionally biased toward low complexity; the sequence is GSSTRTGSQSS. The span at 3024 to 3037 shows a compositional bias: basic and acidic residues; it reads KGDDSSEGSSEKSC. An MYND-type; degenerate zinc finger spans residues 3319-3359; it reads CPRCSRSVTDKHGICSNCHENAYQCRQCRNINYENLDSFLC. A disordered region spans residues 3672–3721; sequence PKSDSGEKEPGMGKSSLMQAKNDDTVGHSVTNLSTSKTQSELSGKIPDGS. The span at 3699-3713 shows a compositional bias: polar residues; the sequence is HSVTNLSTSKTQSEL. Residues 4433–4963 are UBR4 E3 catalytic module; sequence PSIPLILSML…DFVRAIIHGA (531 aa). The segment at 4562-4681 adopts a HemiRING-type zinc-finger fold; that stretch reads GLACMVCREG…WDQLNSLGRA (120 aa). Residues Cys4565, Cys4568, His4615, and Cys4618 each coordinate Zn(2+). The region spanning 4684–4963 is the UZI domain; the sequence is SRLRLLTYDI…DFVRAIIHGA (280 aa). Low complexity predominate over residues 4753-4770; that stretch reads SSSPSTPESPVRLSALSG. 2 disordered regions span residues 4753 to 4778 and 4822 to 4846; these read SSSPSTPESPVRLSALSGARGGSGSS and STLKLSADTSSSAVRSDEGSSADSN. The segment covering 4824 to 4845 has biased composition (polar residues); sequence LKLSADTSSSAVRSDEGSSADS.

This sequence belongs to the UBR4 family.

Its subcellular location is the membrane. Its function is as follows. Required for auxin efflux and polar auxin transport (PAT) influencing auxin-mediated developmental responses (e.g. cell elongation, apical dominance, lateral root production, inflorescence architecture, general growth and development). This Oryza sativa subsp. japonica (Rice) protein is Auxin transport protein BIG.